A 399-amino-acid chain; its full sequence is Ubiquitin-like modifier-activating enzyme 5 (399 aa).

ATP-binding residues include Gly76, Asp97, Lys120, Asn143, and Asn177. Residues Cys219 and Cys222 each coordinate Zn(2+). Cys243 functions as the Glycyl thioester intermediate in the catalytic mechanism. Residues Cys296 and Cys301 each coordinate Zn(2+).

Belongs to the ubiquitin-activating E1 family. UBA5 subfamily.

Its function is as follows. E1-like enzyme which activates UFM1. This chain is Ubiquitin-like modifier-activating enzyme 5, found in Drosophila mojavensis (Fruit fly).